A 144-amino-acid chain; its full sequence is DNA-directed RNA polymerases II and V subunit 6B (144 aa).

Over residues Met-1 to Asp-32 the composition is skewed to acidic residues. The interval Met-1–Ser-62 is disordered. Positions Thr-46–Gln-56 are enriched in basic and acidic residues.

It belongs to the archaeal Rpo6/eukaryotic RPB6 RNA polymerase subunit family. Component of the RNA polymerase II and V complexes.

Its subcellular location is the nucleus. DNA-dependent RNA polymerase catalyzes the transcription of DNA into RNA using the four ribonucleoside triphosphates as substrates. Component of RNA polymerase II which synthesizes mRNA precursors and many functional non-coding RNAs. Pol II is the central component of the basal RNA polymerase II transcription machinery. It is composed of mobile elements that move relative to each other. Component of RNA polymerase V which mediates RNA-directed DNA methylation-dependent (RdDM) transcriptional gene silencing (TGS) of endogenous repeated sequences, including transposable elements. The chain is DNA-directed RNA polymerases II and V subunit 6B (NRPB6B) from Arabidopsis thaliana (Mouse-ear cress).